Here is a 149-residue protein sequence, read N- to C-terminus: Arginine repressor (149 aa).

Belongs to the ArgR family.

Its subcellular location is the cytoplasm. Its pathway is amino-acid biosynthesis; L-arginine biosynthesis [regulation]. Its function is as follows. Regulates arginine biosynthesis genes. The chain is Arginine repressor from Bacillus mycoides (strain KBAB4) (Bacillus weihenstephanensis).